Here is a 448-residue protein sequence, read N- to C-terminus: Asparagine--tRNA ligase (448 aa).

Belongs to the class-II aminoacyl-tRNA synthetase family. Homodimer.

It localises to the cytoplasm. The enzyme catalyses tRNA(Asn) + L-asparagine + ATP = L-asparaginyl-tRNA(Asn) + AMP + diphosphate + H(+). This chain is Asparagine--tRNA ligase, found in Streptococcus sanguinis (strain SK36).